The chain runs to 82 residues: Beta-defensin 113 (82 aa).

A signal peptide spans 1–16 (MKILCIFLTFVFTVSC). 3 cysteine pairs are disulfide-bonded: cysteine 35-cysteine 61, cysteine 42-cysteine 56, and cysteine 46-cysteine 62.

It belongs to the beta-defensin family.

It is found in the secreted. Its function is as follows. Has antibacterial activity. This chain is Beta-defensin 113 (DEFB113), found in Homo sapiens (Human).